Here is a 361-residue protein sequence, read N- to C-terminus: Peptide chain release factor 1 (361 aa).

N5-methylglutamine is present on Gln236. The segment covering 285 to 309 (TAKDSARAADRKAQVGSGDRSERIR) has biased composition (basic and acidic residues). Positions 285–311 (TAKDSARAADRKAQVGSGDRSERIRTY) are disordered.

This sequence belongs to the prokaryotic/mitochondrial release factor family. Post-translationally, methylated by PrmC. Methylation increases the termination efficiency of RF1.

It localises to the cytoplasm. In terms of biological role, peptide chain release factor 1 directs the termination of translation in response to the peptide chain termination codons UAG and UAA. This Methylorubrum extorquens (strain CM4 / NCIMB 13688) (Methylobacterium extorquens) protein is Peptide chain release factor 1.